A 161-amino-acid polypeptide reads, in one-letter code: Methylated-DNA--protein-cysteine methyltransferase (161 aa).

C128 serves as the catalytic Nucleophile; methyl group acceptor.

Belongs to the MGMT family.

Its subcellular location is the cytoplasm. The enzyme catalyses a 6-O-methyl-2'-deoxyguanosine in DNA + L-cysteinyl-[protein] = S-methyl-L-cysteinyl-[protein] + a 2'-deoxyguanosine in DNA. It catalyses the reaction a 4-O-methyl-thymidine in DNA + L-cysteinyl-[protein] = a thymidine in DNA + S-methyl-L-cysteinyl-[protein]. Involved in the cellular defense against the biological effects of O6-methylguanine (O6-MeG) and O4-methylthymine (O4-MeT) in DNA. Repairs the methylated nucleobase in DNA by stoichiometrically transferring the methyl group to a cysteine residue in the enzyme. This is a suicide reaction: the enzyme is irreversibly inactivated. The protein is Methylated-DNA--protein-cysteine methyltransferase of Methanocaldococcus vulcanius (strain ATCC 700851 / DSM 12094 / M7) (Methanococcus vulcanius).